We begin with the raw amino-acid sequence, 606 residues long: Granule-bound starch synthase 1, chloroplastic/amyloplastic (606 aa).

The transit peptide at 1-76 (MSALTTSQLA…GSRRFPSVVV (76 aa)) directs the protein to the chloroplast. A disordered region spans residues 29 to 67 (RHGFQGLKPRSPAGGDASSLSVTTSARATPKQQRSVQRG). The segment covering 46–66 (SSLSVTTSARATPKQQRSVQR) has biased composition (polar residues). K97 provides a ligand contact to ADP-alpha-D-glucose.

It belongs to the glycosyltransferase 1 family. Bacterial/plant glycogen synthase subfamily.

The protein localises to the plastid. Its subcellular location is the chloroplast. It is found in the amyloplast. The catalysed reaction is an NDP-alpha-D-glucose + [(1-&gt;4)-alpha-D-glucosyl](n) = [(1-&gt;4)-alpha-D-glucosyl](n+1) + a ribonucleoside 5'-diphosphate + H(+). Its pathway is glycan biosynthesis; starch biosynthesis. In terms of biological role, required for the synthesis of amylose in endosperm. This chain is Granule-bound starch synthase 1, chloroplastic/amyloplastic (WAXY), found in Oryza sativa (Rice).